Here is a 444-residue protein sequence, read N- to C-terminus: ATP-dependent protease ATPase subunit HslU (444 aa).

ATP is bound by residues isoleucine 18, 60–65 (GVGKTE), aspartate 256, glutamate 322, and arginine 394.

The protein belongs to the ClpX chaperone family. HslU subfamily. In terms of assembly, a double ring-shaped homohexamer of HslV is capped on each side by a ring-shaped HslU homohexamer. The assembly of the HslU/HslV complex is dependent on binding of ATP.

The protein resides in the cytoplasm. Its function is as follows. ATPase subunit of a proteasome-like degradation complex; this subunit has chaperone activity. The binding of ATP and its subsequent hydrolysis by HslU are essential for unfolding of protein substrates subsequently hydrolyzed by HslV. HslU recognizes the N-terminal part of its protein substrates and unfolds these before they are guided to HslV for hydrolysis. This is ATP-dependent protease ATPase subunit HslU from Buchnera aphidicola subsp. Cinara cedri (strain Cc).